We begin with the raw amino-acid sequence, 122 residues long: uncharacterized protein (122 aa).

Residues 1 to 17 form the signal peptide; it reads MKYSSIFSMLSFFILFA.

This is an uncharacterized protein from Escherichia coli (strain K12).